A 325-amino-acid chain; its full sequence is Isoaspartyl peptidase/L-asparaginase (325 aa).

Catalysis depends on T193, which acts as the Nucleophile. Residues 221–224 and 243–246 each bind substrate; these read RIGD and TGKG.

It belongs to the Ntn-hydrolase family. As to quaternary structure, heterotetramer of two alpha and two beta chains arranged as a dimer of alpha/beta heterodimers. Post-translationally, cleaved into an alpha and beta chain by autocatalysis; this activates the enzyme. The N-terminal residue of the beta subunit is responsible for the nucleophile hydrolase activity. Expressed in ripening seeds and developing nodules.

It catalyses the reaction Cleavage of a beta-linked Asp residue from the N-terminus of a polypeptide.. In terms of biological role, degrades proteins damaged by L-isoaspartyl residue formation (also known as beta-Asp residues). Also has L-asparaginase activity, which is used to liberate stored nitrogen during seed development. The chain is Isoaspartyl peptidase/L-asparaginase from Lupinus luteus (European yellow lupine).